Consider the following 448-residue polypeptide: Probable glycine dehydrogenase (decarboxylating) subunit 1 (448 aa).

The protein belongs to the GcvP family. N-terminal subunit subfamily. In terms of assembly, the glycine cleavage system is composed of four proteins: P, T, L and H. In this organism, the P 'protein' is a heterodimer of two subunits.

The enzyme catalyses N(6)-[(R)-lipoyl]-L-lysyl-[glycine-cleavage complex H protein] + glycine + H(+) = N(6)-[(R)-S(8)-aminomethyldihydrolipoyl]-L-lysyl-[glycine-cleavage complex H protein] + CO2. Functionally, the glycine cleavage system catalyzes the degradation of glycine. The P protein binds the alpha-amino group of glycine through its pyridoxal phosphate cofactor; CO(2) is released and the remaining methylamine moiety is then transferred to the lipoamide cofactor of the H protein. The chain is Probable glycine dehydrogenase (decarboxylating) subunit 1 from Geobacillus sp. (strain WCH70).